Reading from the N-terminus, the 233-residue chain is Probable transglycosylase IsaA (233 aa).

The N-terminal stretch at 1–29 (MKKTIMASSLAVALGVTGYAASTGHEAHA) is a signal peptide.

The protein belongs to the transglycosylase family. IsaA subfamily.

It localises to the secreted. Its function is as follows. Is able to cleave peptidoglycan. The chain is Probable transglycosylase IsaA (isaA) from Staphylococcus aureus (strain bovine RF122 / ET3-1).